A 169-amino-acid polypeptide reads, in one-letter code: 4-hydroxylaminobenzoate lyase (169 aa).

It belongs to the PnbB family.

It catalyses the reaction 4-hydroxylaminobenzoate + H2O + H(+) = 3,4-dihydroxybenzoate + NH4(+). Lyase involved in the degradation of nitroaromatic compounds. Catalyzes the conversion of 4-hydroxylaminobenzoate to 3,4-dihydroxybenzoate (protocatechuate). This Nocardioides sp. (strain LMS-CY) protein is 4-hydroxylaminobenzoate lyase.